A 161-amino-acid chain; its full sequence is Lincosamide resistance protein (161 aa).

The chain is Lincosamide resistance protein (linA) from Staphylococcus haemolyticus.